Here is an 88-residue protein sequence, read N- to C-terminus: Small ribosomal subunit protein uS17 (88 aa).

Belongs to the universal ribosomal protein uS17 family. In terms of assembly, part of the 30S ribosomal subunit.

Functionally, one of the primary rRNA binding proteins, it binds specifically to the 5'-end of 16S ribosomal RNA. The sequence is that of Small ribosomal subunit protein uS17 from Ruthia magnifica subsp. Calyptogena magnifica.